A 161-amino-acid polypeptide reads, in one-letter code: Cytochrome c-type biogenesis protein CcmE (161 aa).

Residues 1 to 8 (MNPVRKKR) lie on the Cytoplasmic side of the membrane. A helical; Signal-anchor for type II membrane protein transmembrane segment spans residues 9-29 (LYIVLAILCGVSIAVALALTA). Residues 30 to 161 (LQENINLFYT…AKGYQQESAQ (132 aa)) are Periplasmic-facing. Residues histidine 124 and tyrosine 128 each contribute to the heme site.

The protein belongs to the CcmE/CycJ family.

It is found in the cell inner membrane. In terms of biological role, heme chaperone required for the biogenesis of c-type cytochromes. Transiently binds heme delivered by CcmC and transfers the heme to apo-cytochromes in a process facilitated by CcmF and CcmH. The chain is Cytochrome c-type biogenesis protein CcmE from Ectopseudomonas mendocina (strain ymp) (Pseudomonas mendocina).